The sequence spans 118 residues: Holo-[acyl-carrier-protein] synthase (118 aa).

Mg(2+)-binding residues include aspartate 5 and glutamate 51.

This sequence belongs to the P-Pant transferase superfamily. AcpS family. It depends on Mg(2+) as a cofactor.

The protein resides in the cytoplasm. The enzyme catalyses apo-[ACP] + CoA = holo-[ACP] + adenosine 3',5'-bisphosphate + H(+). In terms of biological role, transfers the 4'-phosphopantetheine moiety from coenzyme A to a Ser of acyl-carrier-protein. The chain is Holo-[acyl-carrier-protein] synthase from Helicobacter pylori (strain P12).